The following is a 342-amino-acid chain: Erlin-1 (342 aa).

Topologically, residues 1-6 (MAHVGA) are cytoplasmic. The helical transmembrane segment at 7 to 23 (VVAAMAGLMAILLHSSI) threads the bilayer. Over 24-342 (HKIEEGHLAV…ASKPKASEGH (319 aa)) the chain is Lumenal. Asparagine 106 carries N-linked (GlcNAc...) asparagine glycosylation. The interval 308–342 (SSASRPAAGESEQLESLSMRESLKKASKPKASEGH) is disordered.

This sequence belongs to the band 7/mec-2 family.

Its subcellular location is the endoplasmic reticulum membrane. In terms of biological role, mediates the endoplasmic reticulum-associated degradation (ERAD) of inositol 1,4,5-trisphosphate receptors (IP3Rs). Involved in regulation of cellular cholesterol homeostasis by regulation the SREBP signaling pathway. Binds cholesterol and may promote ER retention of the SCAP-SREBF complex. This is Erlin-1 from Danio rerio (Zebrafish).